Here is a 914-residue protein sequence, read N- to C-terminus: TRPM8 channel-associated factor 3 (914 aa).

Residues 533–832 (NSWVSTGLYL…TYLQLQEGFG (300 aa)) form the Peptidase M60 domain.

It belongs to the TCAF family. In terms of tissue distribution, prostate-specific. Present in both dorso-lateral and anterior prostate.

Functionally, may play a role in the regulation of the cation channel TRPM8 activity. The polypeptide is TRPM8 channel-associated factor 3 (Mus musculus (Mouse)).